The chain runs to 637 residues: 1-deoxy-D-xylulose-5-phosphate synthase (637 aa).

Residues His-74 and 115–117 each bind thiamine diphosphate; that span reads GHS. Asp-146 contacts Mg(2+). Thiamine diphosphate-binding positions include 147–148, Asn-175, Tyr-285, and Glu-366; that span reads GA. Position 175 (Asn-175) interacts with Mg(2+).

The protein belongs to the transketolase family. DXPS subfamily. In terms of assembly, homodimer. Requires Mg(2+) as cofactor. It depends on thiamine diphosphate as a cofactor.

It carries out the reaction D-glyceraldehyde 3-phosphate + pyruvate + H(+) = 1-deoxy-D-xylulose 5-phosphate + CO2. It participates in metabolic intermediate biosynthesis; 1-deoxy-D-xylulose 5-phosphate biosynthesis; 1-deoxy-D-xylulose 5-phosphate from D-glyceraldehyde 3-phosphate and pyruvate: step 1/1. In terms of biological role, catalyzes the acyloin condensation reaction between C atoms 2 and 3 of pyruvate and glyceraldehyde 3-phosphate to yield 1-deoxy-D-xylulose-5-phosphate (DXP). This chain is 1-deoxy-D-xylulose-5-phosphate synthase, found in Pelotomaculum thermopropionicum (strain DSM 13744 / JCM 10971 / SI).